The following is a 151-amino-acid chain: Ribosome maturation factor RimP (151 aa).

It belongs to the RimP family.

The protein localises to the cytoplasm. Required for maturation of 30S ribosomal subunits. The polypeptide is Ribosome maturation factor RimP (Thermoanaerobacter sp. (strain X514)).